Here is a 427-residue protein sequence, read N- to C-terminus: Fc receptor-like B (427 aa).

The first 17 residues, 1-17 (MWMLAALLLLVPRSGKA), serve as a signal peptide directing secretion. 2 consecutive Ig-like C2-type domains span residues 23 to 101 (PVLT…LSVS) and 103 to 189 (DWLI…VAVT). Cystine bridges form between Cys-44–Cys-85 and Cys-124–Cys-168. Residue Asn-152 is glycosylated (N-linked (GlcNAc...) asparagine). The segment covering 401 to 418 (TPETPNSHVTVNPATPET) has biased composition (polar residues). The disordered stretch occupies residues 401 to 427 (TPETPNSHVTVNPATPETTVMEGRVDS).

In terms of tissue distribution, expressed at low levels. Expressed in B-lymphocytes. Detected in spleen, lymph node, kidney, lung and brain.

The protein resides in the cytoplasm. It localises to the endoplasmic reticulum. In Mus musculus (Mouse), this protein is Fc receptor-like B (Fcrlb).